Consider the following 412-residue polypeptide: Multifunctional CCA protein (412 aa).

ATP is bound by residues glycine 8 and arginine 11. CTP is bound by residues glycine 8 and arginine 11. Positions 21 and 23 each coordinate Mg(2+). Arginine 91, arginine 137, and arginine 140 together coordinate ATP. Residues arginine 91, arginine 137, and arginine 140 each coordinate CTP. An HD domain is found at 228–329 (TGIHTMMVLA…LKVFDKADAW (102 aa)).

The protein belongs to the tRNA nucleotidyltransferase/poly(A) polymerase family. Bacterial CCA-adding enzyme type 1 subfamily. In terms of assembly, monomer. Can also form homodimers and oligomers. It depends on Mg(2+) as a cofactor. The cofactor is Ni(2+).

The enzyme catalyses a tRNA precursor + 2 CTP + ATP = a tRNA with a 3' CCA end + 3 diphosphate. The catalysed reaction is a tRNA with a 3' CCA end + 2 CTP + ATP = a tRNA with a 3' CCACCA end + 3 diphosphate. Its function is as follows. Catalyzes the addition and repair of the essential 3'-terminal CCA sequence in tRNAs without using a nucleic acid template. Adds these three nucleotides in the order of C, C, and A to the tRNA nucleotide-73, using CTP and ATP as substrates and producing inorganic pyrophosphate. tRNA 3'-terminal CCA addition is required both for tRNA processing and repair. Also involved in tRNA surveillance by mediating tandem CCA addition to generate a CCACCA at the 3' terminus of unstable tRNAs. While stable tRNAs receive only 3'-terminal CCA, unstable tRNAs are marked with CCACCA and rapidly degraded. The chain is Multifunctional CCA protein from Aeromonas hydrophila subsp. hydrophila (strain ATCC 7966 / DSM 30187 / BCRC 13018 / CCUG 14551 / JCM 1027 / KCTC 2358 / NCIMB 9240 / NCTC 8049).